The sequence spans 361 residues: Probable pectinesterase 50 (361 aa).

A signal peptide spans 1 to 22 (MGYISMSVVAFLVVFASPVVLA). Gln174 is a binding site for substrate. Asp197 acts as the Proton donor in catalysis. The Nucleophile role is filled by Asp218. Positions 275 and 277 each coordinate substrate.

It belongs to the pectinesterase family. In terms of tissue distribution, expressed in flower buds.

It localises to the secreted. The protein localises to the cell wall. It carries out the reaction [(1-&gt;4)-alpha-D-galacturonosyl methyl ester](n) + n H2O = [(1-&gt;4)-alpha-D-galacturonosyl](n) + n methanol + n H(+). It functions in the pathway glycan metabolism; pectin degradation; 2-dehydro-3-deoxy-D-gluconate from pectin: step 1/5. Acts in the modification of cell walls via demethylesterification of cell wall pectin. In Arabidopsis thaliana (Mouse-ear cress), this protein is Probable pectinesterase 50 (PME50).